Reading from the N-terminus, the 403-residue chain is Aurora kinase A (403 aa).

The tract at residues 1 to 125 (MDRSKENCIS…SKQKNEESKK (125 aa)) is disordered. Polar residues-rich tracts occupy residues 27-83 (VTQQ…QATS) and 91-101 (PLNNTQKSKQP). Phosphoserine is present on residues S41 and S51. Positions 114-125 (LASKQKNEESKK) are enriched in basic and acidic residues. Residues 133–383 (FEIGRPLGKG…LREVLEHPWI (251 aa)) enclose the Protein kinase domain. ATP contacts are provided by residues K143, K162, and 211-213 (EYA). The active-site Proton acceptor is the D256. A Glycyl lysine isopeptide (Lys-Gly) (interchain with G-Cter in SUMO2) cross-link involves residue K258. ATP-binding positions include 260–261 (EN) and D274. Positions 280–293 (HAPSSRRTTLCGTL) are activation segment. Phosphothreonine occurs at positions 287 and 288. S342 carries the post-translational modification Phosphoserine; by PKA and PAK.

The protein belongs to the protein kinase superfamily. Ser/Thr protein kinase family. Aurora subfamily. As to quaternary structure, part of a complex composed of NEDD9, AURKA and CTTN; within the complex NEDD9 acts as a scaffold protein and is required for complex formation. Identified in a complex with AUNIP and NIN. Interacts with FBXL7. Interacts with CPEB1, JTB, TACC1, TPX2, PPP2CA, as well as with the protein phosphatase type 1 (PP1) isoforms PPP1CA, PPP1CB and PPP1CC. Also interacts with its substrates ARHGEF2, BORA, KIF2A, PARD3, and p53/TP53. Interaction with BORA promotes phosphorylation of PLK1. Interacts with CIMAP3. Interacts with GADD45A, competing with its oligomerization. Interacts (via C-terminus) with AUNIP (via C-terminus). Interacts with FRY; this interaction facilitates AURKA-mediated PLK1 phosphorylation. Interacts with SIRT2. Interacts with MYCN; interaction is phospho-independent and triggers AURKA activation; AURKA competes with FBXW7 for binding to unphosphorylated MYCN but not for binding to phosphorylated MYCN. Interacts with HNRNPU. Interacts with AAAS. Interacts with KLHL18 and CUL3. Interacts with FOXP1. Interacts with HDAC6; AURKA-mediated phosphorylation of HDAC6 promotes deacetylation of alpha-tubulin. In terms of processing, activated by phosphorylation at Thr-288; this brings about a change in the conformation of the activation segment. Phosphorylation at Thr-288 varies during the cell cycle and is highest during M phase. Autophosphorylated at Thr-288 upon TPX2 binding. Thr-288 can be phosphorylated by several kinases, including PAK and PKA. Protein phosphatase type 1 (PP1) binds AURKA and inhibits its activity by dephosphorylating Thr-288 during mitosis. Phosphorylation at Ser-342 decreases the kinase activity. PPP2CA controls degradation by dephosphorylating Ser-51 at the end of mitosis. Ubiquitinated by the E3 ubiquitin-protein ligase complex SCF(FBXL7) during mitosis, leading to its degradation by the proteasome. Ubiquitinated by CHFR, leading to its degradation by the proteasome. Ubiquitinated by the anaphase-promoting complex (APC), leading to its degradation by the proteasome. Ubiquitinated by the CUL3-KLHL18 ligase leading to its activation at the centrosome which is required for initiating mitotic entry. Ubiquitination mediated by CUL3-KLHL18 ligase does not lead to its degradation by the proteasome. As to expression, highly expressed in testis and weakly in skeletal muscle, thymus and spleen. Also highly expressed in colon, ovarian, prostate, neuroblastoma, breast and cervical cancer cell lines.

Its subcellular location is the cytoplasm. The protein resides in the cytoskeleton. It localises to the microtubule organizing center. The protein localises to the centrosome. It is found in the spindle pole. Its subcellular location is the centriole. The protein resides in the cell projection. It localises to the neuron projection. The protein localises to the cilium. It is found in the cilium basal body. Its subcellular location is the basolateral cell membrane. The catalysed reaction is L-seryl-[protein] + ATP = O-phospho-L-seryl-[protein] + ADP + H(+). The enzyme catalyses L-threonyl-[protein] + ATP = O-phospho-L-threonyl-[protein] + ADP + H(+). Its activity is regulated as follows. Activation of CDK1, appears to be an upstream event of AURKA activation. Phosphatase inhibitor-2 (PPP1R2) and TPX2 act also as activators. Inactivated by the G2 checkpoint. Inhibited by GADD45A and p53/TP53, and through dephosphorylation by protein phosphatase type 1 (PP1). MLN8054 is also a potent and selective inhibitor. Activated during the early phase of cilia disassembly in the presence of CIMAP3. Inhibited by the small molecule inhibitor VX-680. Functionally, mitotic serine/threonine kinase that contributes to the regulation of cell cycle progression. Associates with the centrosome and the spindle microtubules during mitosis and plays a critical role in various mitotic events including the establishment of mitotic spindle, centrosome duplication, centrosome separation as well as maturation, chromosomal alignment, spindle assembly checkpoint, and cytokinesis. Required for normal spindle positioning during mitosis and for the localization of NUMA1 and DCTN1 to the cell cortex during metaphase. Required for initial activation of CDK1 at centrosomes. Phosphorylates numerous target proteins, including ARHGEF2, BORA, BRCA1, CDC25B, DLGP5, HDAC6, KIF2A, LATS2, NDEL1, PARD3, PPP1R2, PLK1, RASSF1, TACC3, p53/TP53 and TPX2. Phosphorylates MCRS1 which is required for MCRS1-mediated kinetochore fiber assembly and mitotic progression. Regulates KIF2A tubulin depolymerase activity. Important for microtubule formation and/or stabilization. Required for normal axon formation. Plays a role in microtubule remodeling during neurite extension. Also acts as a key regulatory component of the p53/TP53 pathway, and particularly the checkpoint-response pathways critical for oncogenic transformation of cells, by phosphorylating and destabilizing p53/TP53. Phosphorylates its own inhibitors, the protein phosphatase type 1 (PP1) isoforms, to inhibit their activity. Inhibits cilia outgrowth. Required for cilia disassembly via phosphorylation of HDAC6 and subsequent deacetylation of alpha-tubulin. Regulates protein levels of the anti-apoptosis protein BIRC5 by suppressing the expression of the SCF(FBXL7) E3 ubiquitin-protein ligase substrate adapter FBXL7 through the phosphorylation of the transcription factor FOXP1. In Homo sapiens (Human), this protein is Aurora kinase A.